The sequence spans 444 residues: 23S rRNA (uracil(1939)-C(5))-methyltransferase RlmD (444 aa).

Positions 5-67 constitute a TRAM domain; it reads RSRIDRTPFQ…RHFDEARTVE (63 aa). Cys80, Cys86, Cys89, and Cys168 together coordinate [4Fe-4S] cluster. S-adenosyl-L-methionine contacts are provided by Gln276, Phe305, Asn310, Glu326, Asp353, and Asp374. Cys400 serves as the catalytic Nucleophile.

The protein belongs to the class I-like SAM-binding methyltransferase superfamily. RNA M5U methyltransferase family. RlmD subfamily.

It carries out the reaction uridine(1939) in 23S rRNA + S-adenosyl-L-methionine = 5-methyluridine(1939) in 23S rRNA + S-adenosyl-L-homocysteine + H(+). Functionally, catalyzes the formation of 5-methyl-uridine at position 1939 (m5U1939) in 23S rRNA. The protein is 23S rRNA (uracil(1939)-C(5))-methyltransferase RlmD of Stenotrophomonas maltophilia (strain K279a).